The chain runs to 92 residues: Small ribosomal subunit protein uS19 (92 aa).

The protein belongs to the universal ribosomal protein uS19 family.

In terms of biological role, protein S19 forms a complex with S13 that binds strongly to the 16S ribosomal RNA. The polypeptide is Small ribosomal subunit protein uS19 (Anoxybacillus flavithermus (strain DSM 21510 / WK1)).